We begin with the raw amino-acid sequence, 321 residues long: MSKPIQMERGVKYRDADKMALIPVKNVVTERQELLRKPEWLKIKLPTDSSRIQGIKAAMRKNGLHSVCEEASCPNLSECFNHGTATFMILGAICTRRCPFCDVAHGRPVTPDANEPEKLAQTIQDMGLRYVVITSVDRDDLRDGGAQHFADCISAIRAKNPTIKIETLVPDFRGRMDRALDILTATPPDVFNHNLENVPRVYRQVRPGANYDWSLKLLERFKEAHPDIPTKSGLMVGLGETNAEIVEVMHDLRRHGVTMLTLGQYLQPSRHHLPVQRYVSPAEFDEMKAEAMAMGFTHAACGPFVRSSYHADLQAKGMEVK.

Cysteine 68, cysteine 73, cysteine 79, cysteine 94, cysteine 98, cysteine 101, and serine 308 together coordinate [4Fe-4S] cluster. A Radical SAM core domain is found at 80 to 297; that stretch reads FNHGTATFMI…KAEAMAMGFT (218 aa).

This sequence belongs to the radical SAM superfamily. Lipoyl synthase family. [4Fe-4S] cluster serves as cofactor.

It localises to the cytoplasm. The catalysed reaction is [[Fe-S] cluster scaffold protein carrying a second [4Fe-4S](2+) cluster] + N(6)-octanoyl-L-lysyl-[protein] + 2 oxidized [2Fe-2S]-[ferredoxin] + 2 S-adenosyl-L-methionine + 4 H(+) = [[Fe-S] cluster scaffold protein] + N(6)-[(R)-dihydrolipoyl]-L-lysyl-[protein] + 4 Fe(3+) + 2 hydrogen sulfide + 2 5'-deoxyadenosine + 2 L-methionine + 2 reduced [2Fe-2S]-[ferredoxin]. The protein operates within protein modification; protein lipoylation via endogenous pathway; protein N(6)-(lipoyl)lysine from octanoyl-[acyl-carrier-protein]: step 2/2. Functionally, catalyzes the radical-mediated insertion of two sulfur atoms into the C-6 and C-8 positions of the octanoyl moiety bound to the lipoyl domains of lipoate-dependent enzymes, thereby converting the octanoylated domains into lipoylated derivatives. This is Lipoyl synthase from Yersinia pseudotuberculosis serotype O:1b (strain IP 31758).